The chain runs to 266 residues: MKSTNISRSFSKIKKEKRIALMPFLMAGDPDLETTAKILLELQANGADMIELGIPYSDPLADGPIIQLAASRALSAGTSPDRVFKMLFELRDQLKIPIILFTYSNPLINKGLEEFCWQASKVGVSGLVVPDLPLEEAEKLSDIAESKEIDLVLLVAPTTPKDRMKKIAATSNGFTYLVSVTGVTGERSSLEDNVGSLVQQLKDSSSSPIAVGFGISDVKHIEQVREWGADGAIVGSALVKRIANASIEMKVEEAGSFCKELRAATN.

Active-site proton acceptor residues include glutamate 51 and aspartate 62.

Belongs to the TrpA family. Tetramer of two alpha and two beta chains.

It catalyses the reaction (1S,2R)-1-C-(indol-3-yl)glycerol 3-phosphate + L-serine = D-glyceraldehyde 3-phosphate + L-tryptophan + H2O. It participates in amino-acid biosynthesis; L-tryptophan biosynthesis; L-tryptophan from chorismate: step 5/5. In terms of biological role, the alpha subunit is responsible for the aldol cleavage of indoleglycerol phosphate to indole and glyceraldehyde 3-phosphate. The chain is Tryptophan synthase alpha chain from Prochlorococcus marinus (strain NATL1A).